The primary structure comprises 340 residues: Oxygen-dependent coproporphyrinogen-III oxidase (340 aa).

A compositionally biased stretch (polar residues) spans 1 to 14 (MTVSPTTQPQTNHS). The segment at 1–22 (MTVSPTTQPQTNHSLPPADAKQ) is disordered. Serine 109 contributes to the substrate binding site. 2 residues coordinate a divalent metal cation: histidine 113 and histidine 123. Histidine 123 serves as the catalytic Proton donor. 125–127 (NYR) contacts substrate. 2 residues coordinate a divalent metal cation: histidine 157 and histidine 187. The tract at residues 278 to 313 (YVEFNLVYDRGTIFGLQTNGRTESILMSLPPLVRWQ) is important for dimerization. 296–298 (NGR) lines the substrate pocket.

It belongs to the aerobic coproporphyrinogen-III oxidase family. Homodimer. Requires a divalent metal cation as cofactor.

It is found in the cytoplasm. The enzyme catalyses coproporphyrinogen III + O2 + 2 H(+) = protoporphyrinogen IX + 2 CO2 + 2 H2O. The protein operates within porphyrin-containing compound metabolism; protoporphyrin-IX biosynthesis; protoporphyrinogen-IX from coproporphyrinogen-III (O2 route): step 1/1. Involved in the heme and chlorophyll biosynthesis. Catalyzes the aerobic oxidative decarboxylation of propionate groups of rings A and B of coproporphyrinogen-III to yield the vinyl groups in protoporphyrinogen-IX. The polypeptide is Oxygen-dependent coproporphyrinogen-III oxidase (Synechocystis sp. (strain ATCC 27184 / PCC 6803 / Kazusa)).